The primary structure comprises 215 residues: Protein HP-25 homolog 2 (215 aa).

Residues 1–30 form the signal peptide; it reads MPGRGGQSLSMVCVDVWILALSVLSVMADA. Residues 35-79 form a disordered region; sequence VTESCDSQGPPGLPGPPGLPGPPGPPGPPGPPGLRGPTGIPGDIE. The region spanning 43–76 is the Collagen-like domain; it reads GPPGLPGPPGLPGPPGPPGPPGPPGLRGPTGIPG. Residues 45 to 68 are compositionally biased toward pro residues; that stretch reads PGLPGPPGLPGPPGPPGPPGPPGL. The 134-residue stretch at 82-215 folds into the C1q domain; it reads LSPPKSAFAV…GYLLYGNYPG (134 aa).

Its subcellular location is the secreted. The protein is Protein HP-25 homolog 2 of Bos taurus (Bovine).